The sequence spans 311 residues: Olfactory receptor 52J3 (311 aa).

Over 1-27 (MFYHNKSIFHPVTFFLIGIPGLEDFHM) the chain is Extracellular. N-linked (GlcNAc...) asparagine glycosylation is present at Asn-5. A helical transmembrane segment spans residues 28 to 48 (WISGPFCSVYLVALLGNATIL). Residues 49 to 56 (LVIKVEQT) lie on the Cytoplasmic side of the membrane. A helical membrane pass occupies residues 57–77 (LREPMFYFLAILSTIDLALST). At 78–101 (TSVPRMLGIFWFDAHEINYGACVA) the chain is on the extracellular side. A disulfide bridge connects residues Cys-99 and Cys-191. Residues 102-122 (QMFLIHAFTGMEAEVLLAMAF) form a helical membrane-spanning segment. The Cytoplasmic portion of the chain corresponds to 123 to 141 (DRYVAVCAPLHYATILTSQ). Residues 142 to 162 (VLVGISMCIVIRPVLLTLPMV) traverse the membrane as a helical segment. Residues 163–198 (YLIYRLPFCQAHIIAHSYCEHMGIAKLSCGNIRING) lie on the Extracellular side of the membrane. Residues 199 to 218 (IYGLFVVSFFVLNLVLIGIS) form a helical membrane-spanning segment. Topologically, residues 219–238 (YVYILRAVFRLPSHDAQLKA) are cytoplasmic. A helical membrane pass occupies residues 239 to 259 (LSTCGAHVGVICVFYIPSVFS). Over 260-274 (FLTHRFGHQIPGYIH) the chain is Extracellular. A helical membrane pass occupies residues 275 to 295 (ILVANLYLIIPPSLNPIIYGV). Topologically, residues 296 to 311 (RTKQIRERVLYVFTKK) are cytoplasmic.

This sequence belongs to the G-protein coupled receptor 1 family.

It localises to the cell membrane. Functionally, odorant receptor. The polypeptide is Olfactory receptor 52J3 (OR52J3) (Homo sapiens (Human)).